A 121-amino-acid chain; its full sequence is Small ribosomal subunit protein uS13 (121 aa).

The interval 94-121 (GLPLRGQRTRTNARTRKGPRKAGVALKK) is disordered.

Belongs to the universal ribosomal protein uS13 family. In terms of assembly, part of the 30S ribosomal subunit. Forms a loose heterodimer with protein S19. Forms two bridges to the 50S subunit in the 70S ribosome.

Functionally, located at the top of the head of the 30S subunit, it contacts several helices of the 16S rRNA. In the 70S ribosome it contacts the 23S rRNA (bridge B1a) and protein L5 of the 50S subunit (bridge B1b), connecting the 2 subunits; these bridges are implicated in subunit movement. Contacts the tRNAs in the A and P-sites. This chain is Small ribosomal subunit protein uS13, found in Ralstonia nicotianae (strain ATCC BAA-1114 / GMI1000) (Ralstonia solanacearum).